A 187-amino-acid polypeptide reads, in one-letter code: Protein lethal(2)essential for life (187 aa).

In terms of domain architecture, sHSP spans 61–170 (NSLQKQESGS…TERLVQITQT (110 aa)). A disordered region spans residues 151-187 (APMKALPPPQTERLVQITQTGPSSKEDNAKKVETSTA). Residues 174–187 (SKEDNAKKVETSTA) show a composition bias toward basic and acidic residues.

The protein belongs to the small heat shock protein (HSP20) family. Ubiquitously expressed during embryogenesis with no sign of tissue specificity in expression up to stage 16.

In terms of biological role, vital role in embryonic development. The polypeptide is Protein lethal(2)essential for life (l(2)efl) (Drosophila melanogaster (Fruit fly)).